The sequence spans 829 residues: Transmembrane protease serine 7 (829 aa).

Residues 1 to 62 are Cytoplasmic-facing; the sequence is MDKEKSDPSC…RAPFWNVQNK (62 aa). The segment at 26 to 52 is disordered; sequence SVPGKLPGRRPPRKPIGKPRPRKQPKK. Positions 32-52 are enriched in basic residues; the sequence is PGRRPPRKPIGKPRPRKQPKK. Residues 63–83 form a helical; Signal-anchor for type II membrane protein membrane-spanning segment; sequence IILFTVFLFILAVTAWTLLWL. At 84-829 the chain is on the extracellular side; that stretch reads YISKTESKDA…WIHKYVPSLL (746 aa). The SEA domain maps to 92-220; the sequence is DAFYFVGMFR…DSVVLNAGLR (129 aa). 3 disulfides stabilise this stretch: C233-C259, C285-C308, and C351-C382. CUB domains are found at residues 233 to 346 and 351 to 467; these read CSRY…FEVI and CEST…YNIS. N-linked (GlcNAc...) asparagine glycosylation is found at N401 and N465. LDL-receptor class A domains are found at residues 469–505, 503–540, and 544–581; these read PCPA…LFCV, FCVT…QNCT, and PCTS…EGCG. 9 disulfides stabilise this stretch: C470/C482, C477/C495, C489/C504, C511/C530, C524/C539, C545/C557, C552/C571, C565/C580, and C617/C633. Residues 592–826 form the Peptidase S1 domain; it reads IVGGSDSQEG…FVPWIHKYVP (235 aa). Catalysis depends on charge relay system residues H632 and D680. 3 cysteine pairs are disulfide-bonded: C716–C782, C748–C761, and C772–C802. S776 (charge relay system) is an active-site residue.

The protein belongs to the peptidase S1 family. In terms of assembly, forms a heterodimer with SERPINA5. Post-translationally, N-glycosylated. As to expression, expressed in brain, eye, testis, skin, epididymis and salivary gland with lower levels in heart, skeletal muscle, thymus, ovary, prostate and uterus.

The protein localises to the cell membrane. Functionally, serine protease which preferentially hydrolyzes peptides with Arg at the P1 position. This chain is Transmembrane protease serine 7 (Tmprss7), found in Mus musculus (Mouse).